A 351-amino-acid chain; its full sequence is Nicotinate-nucleotide--dimethylbenzimidazole phosphoribosyltransferase (351 aa).

Glutamate 317 (proton acceptor) is an active-site residue.

It belongs to the CobT family.

It catalyses the reaction 5,6-dimethylbenzimidazole + nicotinate beta-D-ribonucleotide = alpha-ribazole 5'-phosphate + nicotinate + H(+). It functions in the pathway nucleoside biosynthesis; alpha-ribazole biosynthesis; alpha-ribazole from 5,6-dimethylbenzimidazole: step 1/2. Its function is as follows. Catalyzes the synthesis of alpha-ribazole-5'-phosphate from nicotinate mononucleotide (NAMN) and 5,6-dimethylbenzimidazole (DMB). This chain is Nicotinate-nucleotide--dimethylbenzimidazole phosphoribosyltransferase, found in Pseudomonas putida (strain ATCC 700007 / DSM 6899 / JCM 31910 / BCRC 17059 / LMG 24140 / F1).